Consider the following 564-residue polypeptide: Potassium-transporting ATPase potassium-binding subunit (564 aa).

The next 10 helical transmembrane spans lie at 4–24 (HEILLILAFFALVLVPAPFLG), 67–87 (TLALLAFNLAGLVLLFSILML), 135–155 (VGLTVQNFVSAAVGLCVLVAL), 179–199 (LYVLLPLCLLLALLLVWQGVP), 258–278 (FEVASIILIPAALVFTFGHYV), 286–306 (AILGCMLLLFCLGLGLSLWAE), 376–396 (IFGGVGAGLYGMLLFVLIAVF), 420–440 (LLVFTLLVMPVGVLVLGAIAA), 487–507 (LMIGLAMLIGRFGYILPILAI), and 528–548 (GPLFVSLLTVTILLVGGLTFL).

Belongs to the KdpA family. The system is composed of three essential subunits: KdpA, KdpB and KdpC.

The protein localises to the cell inner membrane. Part of the high-affinity ATP-driven potassium transport (or Kdp) system, which catalyzes the hydrolysis of ATP coupled with the electrogenic transport of potassium into the cytoplasm. This subunit binds the periplasmic potassium ions and delivers the ions to the membrane domain of KdpB through an intramembrane tunnel. This Pseudomonas aeruginosa (strain ATCC 15692 / DSM 22644 / CIP 104116 / JCM 14847 / LMG 12228 / 1C / PRS 101 / PAO1) protein is Potassium-transporting ATPase potassium-binding subunit.